Consider the following 134-residue polypeptide: Complexin-1 (134 aa).

Disordered stretches follow at residues 1 to 60 and 74 to 113; these read MEFV…AERE and KKEEREAEAQAAMEANSEGSLTRPKKAIPPGCGDEVEEED. The segment covering 15–60 has biased composition (basic and acidic residues); the sequence is DMGKMLGGDEEKDPDAAKKEEERQEALRQAEEERKAKYAKMEAERE. A coiled-coil region spans residues 29–69; the sequence is DAAKKEEERQEALRQAEEERKAKYAKMEAEREAVRQGIRDK. Residues 48–70 form an interaction with the SNARE complex region; the sequence is RKAKYAKMEAEREAVRQGIRDKY.

Belongs to the complexin/synaphin family. Binds to the SNARE core complex containing SNAP25, VAMP2 and STX1A. Nervous system. In hippocampus and cerebellum, expressed mainly by inhibitory neurons. Overexpressed in substantia nigra from patients with Parkinson disease.

It localises to the cytoplasm. It is found in the cytosol. Its subcellular location is the perikaryon. The protein localises to the presynapse. In terms of biological role, positively regulates a late step in exocytosis of various cytoplasmic vesicles, such as synaptic vesicles and other secretory vesicles. Organizes the SNAREs into a cross-linked zigzag topology that, when interposed between the vesicle and plasma membranes, is incompatible with fusion, thereby preventing SNAREs from releasing neurotransmitters until an action potential arrives at the synapse. Also involved in glucose-induced secretion of insulin by pancreatic beta-cells. Essential for motor behavior. The polypeptide is Complexin-1 (CPLX1) (Homo sapiens (Human)).